The primary structure comprises 155 residues: 2-C-methyl-D-erythritol 2,4-cyclodiphosphate synthase (155 aa).

Residues D8 and H10 each contribute to the a divalent metal cation site. Residues 8–10 (DVH) and 34–35 (HS) each bind 4-CDP-2-C-methyl-D-erythritol 2-phosphate. H42 provides a ligand contact to a divalent metal cation. 4-CDP-2-C-methyl-D-erythritol 2-phosphate contacts are provided by residues 56-58 (DIG), 61-65 (FPDSD), 100-106 (AQKPKML), 132-135 (TTEE), F139, and K142.

It belongs to the IspF family. In terms of assembly, homotrimer. A divalent metal cation serves as cofactor.

It carries out the reaction 4-CDP-2-C-methyl-D-erythritol 2-phosphate = 2-C-methyl-D-erythritol 2,4-cyclic diphosphate + CMP. Its pathway is isoprenoid biosynthesis; isopentenyl diphosphate biosynthesis via DXP pathway; isopentenyl diphosphate from 1-deoxy-D-xylulose 5-phosphate: step 4/6. In terms of biological role, involved in the biosynthesis of isopentenyl diphosphate (IPP) and dimethylallyl diphosphate (DMAPP), two major building blocks of isoprenoid compounds. Catalyzes the conversion of 4-diphosphocytidyl-2-C-methyl-D-erythritol 2-phosphate (CDP-ME2P) to 2-C-methyl-D-erythritol 2,4-cyclodiphosphate (ME-CPP) with a corresponding release of cytidine 5-monophosphate (CMP). In Clostridium botulinum (strain Kyoto / Type A2), this protein is 2-C-methyl-D-erythritol 2,4-cyclodiphosphate synthase.